The sequence spans 393 residues: NAD(P)H-quinone oxidoreductase subunit H, chloroplastic (393 aa).

This sequence belongs to the complex I 49 kDa subunit family. NDH is composed of at least 16 different subunits, 5 of which are encoded in the nucleus.

The protein localises to the plastid. The protein resides in the chloroplast thylakoid membrane. The enzyme catalyses a plastoquinone + NADH + (n+1) H(+)(in) = a plastoquinol + NAD(+) + n H(+)(out). It catalyses the reaction a plastoquinone + NADPH + (n+1) H(+)(in) = a plastoquinol + NADP(+) + n H(+)(out). Its function is as follows. NDH shuttles electrons from NAD(P)H:plastoquinone, via FMN and iron-sulfur (Fe-S) centers, to quinones in the photosynthetic chain and possibly in a chloroplast respiratory chain. The immediate electron acceptor for the enzyme in this species is believed to be plastoquinone. Couples the redox reaction to proton translocation, and thus conserves the redox energy in a proton gradient. This Chlorokybus atmophyticus (Soil alga) protein is NAD(P)H-quinone oxidoreductase subunit H, chloroplastic.